Reading from the N-terminus, the 107-residue chain is Defensin-like protein 242 (107 aa).

Residues 1–22 form the signal peptide; sequence MKVVAIFLASCVLFSLIPTHLS. Cystine bridges form between Cys45/Cys100, Cys55/Cys84, Cys65/Cys94, and Cys82/Cys96.

This sequence belongs to the DEFL family.

It is found in the secreted. The protein is Defensin-like protein 242 (SCRL10) of Arabidopsis thaliana (Mouse-ear cress).